Reading from the N-terminus, the 149-residue chain is Cytochrome c oxidase subunit 5A, mitochondrial (149 aa).

Belongs to the cytochrome c oxidase subunit 5A family. Component of the cytochrome c oxidase (complex IV, CIV), a multisubunit enzyme composed of a catalytic core of 3 subunits and several supernumerary subunits. The complex exists as a monomer or a dimer and forms supercomplexes (SCs) in the inner mitochondrial membrane with ubiquinol-cytochrome c oxidoreductase (cytochrome b-c1 complex, complex III, CIII).

The protein localises to the mitochondrion inner membrane. It participates in energy metabolism; oxidative phosphorylation. Its function is as follows. Component of the cytochrome c oxidase, the last enzyme in the mitochondrial electron transport chain which drives oxidative phosphorylation. The respiratory chain contains 3 multisubunit complexes succinate dehydrogenase (complex II, CII), ubiquinol-cytochrome c oxidoreductase (cytochrome b-c1 complex, complex III, CIII) and cytochrome c oxidase (complex IV, CIV), that cooperate to transfer electrons derived from NADH and succinate to molecular oxygen, creating an electrochemical gradient over the inner membrane that drives transmembrane transport and the ATP synthase. Cytochrome c oxidase is the component of the respiratory chain that catalyzes the reduction of oxygen to water. Electrons originating from reduced cytochrome c in the intermembrane space (IMS) are transferred via the dinuclear copper A center (CU(A)) of subunit 2 and heme A of subunit 1 to the active site in subunit 1, a binuclear center (BNC) formed by heme A3 and copper B (CU(B)). The BNC reduces molecular oxygen to 2 water molecules using 4 electrons from cytochrome c in the IMS and 4 protons from the mitochondrial matrix. The polypeptide is Cytochrome c oxidase subunit 5A, mitochondrial (Drosophila melanogaster (Fruit fly)).